Reading from the N-terminus, the 692-residue chain is Elongation factor G (692 aa).

Residues 8 to 282 (ENTRNIGIMA…GVVDYLPSPV (275 aa)) form the tr-type G domain. GTP-binding positions include 17 to 24 (AHIDAGKT), 81 to 85 (DTPGH), and 135 to 138 (NKMD).

It belongs to the TRAFAC class translation factor GTPase superfamily. Classic translation factor GTPase family. EF-G/EF-2 subfamily.

Its subcellular location is the cytoplasm. Its function is as follows. Catalyzes the GTP-dependent ribosomal translocation step during translation elongation. During this step, the ribosome changes from the pre-translocational (PRE) to the post-translocational (POST) state as the newly formed A-site-bound peptidyl-tRNA and P-site-bound deacylated tRNA move to the P and E sites, respectively. Catalyzes the coordinated movement of the two tRNA molecules, the mRNA and conformational changes in the ribosome. The chain is Elongation factor G from Geobacillus sp. (strain WCH70).